The sequence spans 111 residues: T cell receptor beta variable 20-1 (111 aa).

The signal sequence occupies residues 1-15 (MLLLLLLLGPGSGLG). In terms of domain architecture, Ig-like spans 16–111 (AVVSQHPSRV…DSSFYICSAR (96 aa)). A disulfide bridge links Cys-37 with Cys-108.

Alpha-beta TR is a heterodimer composed of an alpha and beta chain; disulfide-linked. The alpha-beta TR is associated with the transmembrane signaling CD3 coreceptor proteins to form the TR-CD3 (TcR or TCR). The assembly of alpha-beta TR heterodimers with CD3 occurs in the endoplasmic reticulum where a single alpha-beta TR heterodimer associates with one CD3D-CD3E heterodimer, one CD3G-CD3E heterodimer and one CD247 homodimer forming a stable octameric structure. CD3D-CD3E and CD3G-CD3E heterodimers preferentially associate with TR alpha and TR beta chains, respectively. The association of the CD247 homodimer is the last step of TcR assembly in the endoplasmic reticulum and is required for transport to the cell surface.

Its subcellular location is the cell membrane. In terms of biological role, v region of the variable domain of T cell receptor (TR) beta chain that participates in the antigen recognition. Alpha-beta T cell receptors are antigen specific receptors which are essential to the immune response and are present on the cell surface of T lymphocytes. Recognize peptide-major histocompatibility (MH) (pMH) complexes that are displayed by antigen presenting cells (APC), a prerequisite for efficient T cell adaptive immunity against pathogens. Binding of alpha-beta TR to pMH complex initiates TR-CD3 clustering on the cell surface and intracellular activation of LCK that phosphorylates the ITAM motifs of CD3G, CD3D, CD3E and CD247 enabling the recruitment of ZAP70. In turn ZAP70 phosphorylates LAT, which recruits numerous signaling molecules to form the LAT signalosome. The LAT signalosome propagates signal branching to three major signaling pathways, the calcium, the mitogen-activated protein kinase (MAPK) kinase and the nuclear factor NF-kappa-B (NF-kB) pathways, leading to the mobilization of transcription factors that are critical for gene expression and essential for T cell growth and differentiation. The T cell repertoire is generated in the thymus, by V-(D)-J rearrangement. This repertoire is then shaped by intrathymic selection events to generate a peripheral T cell pool of self-MH restricted, non-autoaggressive T cells. Post-thymic interaction of alpha-beta TR with the pMH complexes shapes TR structural and functional avidity. This Homo sapiens (Human) protein is T cell receptor beta variable 20-1.